The sequence spans 144 residues: MAAMTAAAVPATGSFQKQDEEWRAVLSPEQFRVLRLKGTDKRGKGEFTKKFEEGTYSCAGCGTALYKSTTKFDSGCGWPAFFDAIPGAIKQTPEAGGRRMEITCAVCDGHLGHVFKGEGYSTPTDQRHCVNSVSLKFSSAGSSQ.

In terms of domain architecture, MsrB spans 19–140 (DEEWRAVLSP…NSVSLKFSSA (122 aa)). The Zn(2+) site is built by cysteine 58, cysteine 61, cysteine 104, and cysteine 107. The cysteines at positions 76 and 129 are disulfide-linked. Cysteine 129 functions as the Nucleophile in the catalytic mechanism.

This sequence belongs to the MsrB Met sulfoxide reductase family. The cofactor is Zn(2+).

It is found in the cytoplasm. The protein localises to the cytosol. It catalyses the reaction L-methionyl-[protein] + [thioredoxin]-disulfide + H2O = L-methionyl-(R)-S-oxide-[protein] + [thioredoxin]-dithiol. In terms of biological role, catalyzes the reduction of methionine sulfoxide (MetSO) to methionine in proteins. Plays a protective role against oxidative stress by restoring activity to proteins that have been inactivated by methionine oxidation. MSRB family specifically reduces the MetSO R-enantiomer. The chain is Peptide methionine sulfoxide reductase B7 (MSRB7) from Arabidopsis thaliana (Mouse-ear cress).